A 156-amino-acid chain; its full sequence is Putative pre-16S rRNA nuclease (156 aa).

The protein belongs to the YqgF nuclease family.

It is found in the cytoplasm. Could be a nuclease involved in processing of the 5'-end of pre-16S rRNA. This Albidiferax ferrireducens (strain ATCC BAA-621 / DSM 15236 / T118) (Rhodoferax ferrireducens) protein is Putative pre-16S rRNA nuclease.